A 259-amino-acid polypeptide reads, in one-letter code: DNA-directed RNA polymerase 30 kDa polypeptide (259 aa).

Residues 155–195 (YNTPCPNCKSRNTTPMMIQTRAADEPPLVRHACRDCKQHFK) form a TFIIS-type zinc finger. Zn(2+)-binding residues include Cys-159, Cys-162, Cys-187, and Cys-190. The tract at residues 220–259 (EILPDNNPSPPESPEPASPIDDGLIRVTFDRNDEPPEDDE) is disordered. The span at 226-236 (NPSPPESPEPA) shows a compositional bias: pro residues.

This sequence belongs to the poxviridae DNA-directed RNA polymerase 30 kDa subunit family. The DNA-dependent RNA polymerase (vRNAP) consists of eight subunits encoded by early viral genes and termed according to their apparent molecular masses Rpo147, Rpo132, Rpo35, Rpo30, Rpo22, Rpo19, Rpo18, and Rpo7. The same holoenzyme, with the addition of the transcription-specificity factor RAP94, is used for early gene expression.

The protein resides in the virion. It is found in the host cytoplasm. The catalysed reaction is RNA(n) + a ribonucleoside 5'-triphosphate = RNA(n+1) + diphosphate. Part of the DNA-dependent RNA polymerase which catalyzes the transcription of viral DNA into RNA using the four ribonucleoside triphosphates as substrates. Responsible for the transcription of early, intermediate and late genes. DNA-dependent RNA polymerase associates with the early transcription factor (ETF), itself composed of OPG118 and OPG134, thereby allowing the early genes transcription. Late transcription, and probably also intermediate transcription, require newly synthesized RNA polymerase. This Variola virus (isolate Human/India/Ind3/1967) (VARV) protein is DNA-directed RNA polymerase 30 kDa polypeptide (OPG066).